The chain runs to 146 residues: UPF0742 protein SPAC977.02 (146 aa).

The helical transmembrane segment at 38–60 (LTVKYCLAVKLLIYLLYCWYIYS) threads the bilayer.

It belongs to the UPF0742 family.

It localises to the cytoplasm. The protein resides in the nucleus membrane. This is UPF0742 protein SPAC977.02 from Schizosaccharomyces pombe (strain 972 / ATCC 24843) (Fission yeast).